A 339-amino-acid polypeptide reads, in one-letter code: tRNA N6-adenosine threonylcarbamoyltransferase (339 aa).

The Fe cation site is built by His111 and His115. Substrate-binding positions include 139–143 (LVSGG), Asp172, Gly185, Asp189, and Asn280. Position 308 (Asp308) interacts with Fe cation.

It belongs to the KAE1 / TsaD family. Fe(2+) is required as a cofactor.

The protein localises to the cytoplasm. The enzyme catalyses L-threonylcarbamoyladenylate + adenosine(37) in tRNA = N(6)-L-threonylcarbamoyladenosine(37) in tRNA + AMP + H(+). In terms of biological role, required for the formation of a threonylcarbamoyl group on adenosine at position 37 (t(6)A37) in tRNAs that read codons beginning with adenine. Is involved in the transfer of the threonylcarbamoyl moiety of threonylcarbamoyl-AMP (TC-AMP) to the N6 group of A37, together with TsaE and TsaB. TsaD likely plays a direct catalytic role in this reaction. The sequence is that of tRNA N6-adenosine threonylcarbamoyltransferase from Phocaeicola vulgatus (strain ATCC 8482 / DSM 1447 / JCM 5826 / CCUG 4940 / NBRC 14291 / NCTC 11154) (Bacteroides vulgatus).